The chain runs to 358 residues: Extracellular phospholipase C (358 aa).

The protein localises to the secreted. This chain is Extracellular phospholipase C (plcA), found in Dickeya chrysanthemi (Pectobacterium chrysanthemi).